A 352-amino-acid polypeptide reads, in one-letter code: Uroporphyrinogen decarboxylase (352 aa).

Substrate is bound by residues 27–31 (RQAGR), aspartate 77, tyrosine 154, threonine 209, and histidine 325.

The protein belongs to the uroporphyrinogen decarboxylase family. As to quaternary structure, homodimer.

Its subcellular location is the cytoplasm. The catalysed reaction is uroporphyrinogen III + 4 H(+) = coproporphyrinogen III + 4 CO2. It functions in the pathway porphyrin-containing compound metabolism; protoporphyrin-IX biosynthesis; coproporphyrinogen-III from 5-aminolevulinate: step 4/4. In terms of biological role, catalyzes the decarboxylation of four acetate groups of uroporphyrinogen-III to yield coproporphyrinogen-III. The chain is Uroporphyrinogen decarboxylase from Legionella pneumophila (strain Corby).